A 517-amino-acid chain; its full sequence is 6-phosphogluconate dehydrogenase, decarboxylating (517 aa).

NADP(+)-binding positions include 35–40, 58–60, 100–102, and asparagine 128; these read GLAVMG, NRT, and VKA. Residues asparagine 128 and 154 to 156 contribute to the substrate site; that span reads SGG. The active-site Proton acceptor is lysine 208. 211 to 212 is a substrate binding site; that stretch reads HN. Glutamate 215 acts as the Proton donor in catalysis. Residues tyrosine 216, lysine 286, arginine 313, arginine 474, and histidine 480 each coordinate substrate.

It belongs to the 6-phosphogluconate dehydrogenase family. In terms of assembly, homodimer.

The enzyme catalyses 6-phospho-D-gluconate + NADP(+) = D-ribulose 5-phosphate + CO2 + NADPH. It functions in the pathway carbohydrate degradation; pentose phosphate pathway; D-ribulose 5-phosphate from D-glucose 6-phosphate (oxidative stage): step 3/3. In terms of biological role, catalyzes the oxidative decarboxylation of 6-phosphogluconate to ribulose 5-phosphate and CO(2), with concomitant reduction of NADP to NADPH. This chain is 6-phosphogluconate dehydrogenase, decarboxylating (DOR14), found in Candida albicans (Yeast).